The primary structure comprises 167 residues: NADH-quinone oxidoreductase subunit B (167 aa).

Residues C40, C41, C105, and C135 each contribute to the [4Fe-4S] cluster site.

This sequence belongs to the complex I 20 kDa subunit family. In terms of assembly, NDH-1 is composed of 14 different subunits. Subunits NuoB, C, D, E, F, and G constitute the peripheral sector of the complex. The cofactor is [4Fe-4S] cluster.

The protein localises to the cell inner membrane. It catalyses the reaction a quinone + NADH + 5 H(+)(in) = a quinol + NAD(+) + 4 H(+)(out). Functionally, NDH-1 shuttles electrons from NADH, via FMN and iron-sulfur (Fe-S) centers, to quinones in the respiratory chain. The immediate electron acceptor for the enzyme in this species is believed to be ubiquinone. Couples the redox reaction to proton translocation (for every two electrons transferred, four hydrogen ions are translocated across the cytoplasmic membrane), and thus conserves the redox energy in a proton gradient. This Magnetococcus marinus (strain ATCC BAA-1437 / JCM 17883 / MC-1) protein is NADH-quinone oxidoreductase subunit B.